Reading from the N-terminus, the 273-residue chain is MLSRRGHRLSRFRKNKRRLRERLRQRIFFRDKVVPEAMEKPRVLVLTGAGISAESGIRTFRAADGLWEEHRVEDVATPEGFDRDPELVQTFYNARRRQLQQPEIQPNAAHLALAKLQDALGDRFLLVTQNIDNLHERAGNTNVIHMHGELLKVRCSQSGQVLDWTGDVTPEDKCHCCQFPAPLRPHVVWFGEMPLGMDEIYMALSMADIFIAIGTSGHVYPAAGFVHEAKLHGAHTVELNLEPSQVGNEFAEKYYGPASQVVPEFVEKLLKGL.

Residues 20–272 form the Deacetylase sirtuin-type domain; sequence RERLRQRIFF…PEFVEKLLKG (253 aa). Position 48 to 67 (48 to 67) interacts with NAD(+); sequence GAGISAESGIRTFRAADGLW. Tyr92 and Arg95 together coordinate substrate. NAD(+) is bound at residue 129–132; it reads QNID. His147 functions as the Proton acceptor in the catalytic mechanism. 2 residues coordinate Zn(2+): Cys155 and Cys174. Residues 214 to 216, 240 to 242, and Ala258 contribute to the NAD(+) site; these read GTS and NLE.

It belongs to the sirtuin family. Class III subfamily. The cofactor is Zn(2+).

It is found in the cytoplasm. It carries out the reaction N(6)-acetyl-L-lysyl-[protein] + NAD(+) + H2O = 2''-O-acetyl-ADP-D-ribose + nicotinamide + L-lysyl-[protein]. The catalysed reaction is N(6)-succinyl-L-lysyl-[protein] + NAD(+) + H2O = 2''-O-succinyl-ADP-D-ribose + nicotinamide + L-lysyl-[protein]. It catalyses the reaction N(6)-(2-hydroxyisobutanoyl)-L-lysyl-[protein] + NAD(+) + H2O = 2''-O-(2-hydroxyisobutanoyl)-ADP-D-ribose + nicotinamide + L-lysyl-[protein]. NAD-dependent lysine deacetylase that specifically removes acetyl groups on target proteins. Also acts as a protein-lysine deacylase by mediating protein desuccinylation and de-2-hydroxyisobutyrylation. Modulates the activities of several proteins which are inactive in their acylated form. This chain is NAD-dependent protein deacylase, found in Escherichia coli O6:H1 (strain CFT073 / ATCC 700928 / UPEC).